The following is a 95-amino-acid chain: Alpha-conotoxin-like Ms20.5 (95 aa).

An N-terminal signal peptide occupies residues 1–24 (MPKLAVVLLVLLILPLSYFDAAGG). The propeptide occupies 25 to 45 (QAAEGDRRGNGLARYLQRGGR). Residue glutamate 50 is modified to 4-carboxyglutamate. Proline 56 carries the 4-hydroxyproline modification. 4 disulfides stabilise this stretch: cysteine 64–cysteine 73, cysteine 69–cysteine 81, cysteine 74–cysteine 91, and cysteine 79–cysteine 93.

This sequence belongs to the conotoxin D superfamily. Hetero-, homo- or pseudo-homodimer (identical sequence, different post-translational modifications). Heterodimer of [carboxy'Glu-49', hydroxy'Pro-55']Ms20.3 and [carboxyGlu-50, hydroxyPro-56]Ms20.5 may exist. Expressed by the venom duct.

The protein localises to the secreted. Functionally, alpha-conotoxins act on postsynaptic membranes, they bind to the nicotinic acetylcholine receptors (nAChR) and thus inhibit them. Through its two C-terminal domains, this homodimeric protein would bind to two nAChR allosteric sites, located outside the nAChR C-loop of the principal binding face and at the adjacent binding interface in a clockwise direction. This toxin specifically blocks mammalian neuronal nAChR of the alpha-7/CHRNA7, alpha-3-beta-2/CHRNA3-CHRNB2 and alpha-4-beta-2/CHRNA4-CHRNB2 subtypes. The sequence is that of Alpha-conotoxin-like Ms20.5 from Conus mustelinus (Weasel cone).